The primary structure comprises 215 residues: 3-isopropylmalate dehydratase small subunit (215 aa).

It belongs to the LeuD family. LeuD type 1 subfamily. Heterodimer of LeuC and LeuD.

The enzyme catalyses (2R,3S)-3-isopropylmalate = (2S)-2-isopropylmalate. Its pathway is amino-acid biosynthesis; L-leucine biosynthesis; L-leucine from 3-methyl-2-oxobutanoate: step 2/4. Its function is as follows. Catalyzes the isomerization between 2-isopropylmalate and 3-isopropylmalate, via the formation of 2-isopropylmaleate. The chain is 3-isopropylmalate dehydratase small subunit from Leptothrix cholodnii (strain ATCC 51168 / LMG 8142 / SP-6) (Leptothrix discophora (strain SP-6)).